The primary structure comprises 98 residues: Small ribosomal subunit protein bS20 (98 aa).

Residues 1–12 are compositionally biased toward basic residues; it reads MAPKKTTKKGGP. The segment at 1 to 20 is disordered; sequence MAPKKTTKKGGPQKRPSAEK.

Belongs to the bacterial ribosomal protein bS20 family.

Functionally, binds directly to 16S ribosomal RNA. The polypeptide is Small ribosomal subunit protein bS20 (Chlamydia caviae (strain ATCC VR-813 / DSM 19441 / 03DC25 / GPIC) (Chlamydophila caviae)).